The chain runs to 263 residues: MDVMNAFDSQAEDSPLTIGHSLRRRPLARKKLSEMVEEELEQMIRRHEFGEGEQLPSERELMAFFNVGRPSVREALAALKRKGLVQINNGERARVSRPSADTIISELSGMAKDFLTHPGGIAHFEQLRLFFESSLVRYAAEHATDEQIALLTKALEINSQSLDDNALFIRSDVEFHRVLAEIPGNPIFMAIHVALLDWLIAARPSVPDRELHEHNNVSYQQHIVIVDAIRQRDPDKADRALQTHLNSVSATWHAFGKKSQKTR.

In terms of domain architecture, HTH gntR-type spans 30–98; that stretch reads KKLSEMVEEE…NGERARVSRP (69 aa). The segment at residues 58–77 is a DNA-binding region (H-T-H motif); the sequence is ERELMAFFNVGRPSVREALA.

Belongs to the NanR family.

Transcriptional repressor that controls expression of the genes required for the catabolism of sialic acids. This is HTH-type transcriptional repressor NanR from Salmonella arizonae (strain ATCC BAA-731 / CDC346-86 / RSK2980).